We begin with the raw amino-acid sequence, 263 residues long: Acyl-[acyl-carrier-protein]--UDP-N-acetylglucosamine O-acyltransferase (263 aa).

This sequence belongs to the transferase hexapeptide repeat family. LpxA subfamily. In terms of assembly, homotrimer.

It localises to the cytoplasm. It carries out the reaction a (3R)-hydroxyacyl-[ACP] + UDP-N-acetyl-alpha-D-glucosamine = a UDP-3-O-[(3R)-3-hydroxyacyl]-N-acetyl-alpha-D-glucosamine + holo-[ACP]. It participates in glycolipid biosynthesis; lipid IV(A) biosynthesis; lipid IV(A) from (3R)-3-hydroxytetradecanoyl-[acyl-carrier-protein] and UDP-N-acetyl-alpha-D-glucosamine: step 1/6. Involved in the biosynthesis of lipid A, a phosphorylated glycolipid that anchors the lipopolysaccharide to the outer membrane of the cell. This is Acyl-[acyl-carrier-protein]--UDP-N-acetylglucosamine O-acyltransferase from Stenotrophomonas maltophilia (strain K279a).